Consider the following 514-residue polypeptide: Protein phosphatase 1H (514 aa).

S7 is subject to Phosphoserine. The 431-residue stretch at 77 to 507 (ATGYAEVINA…DDISVYVIPL (431 aa)) folds into the PPM-type phosphatase domain. Positions 109-135 (AVTSTPNRNSSKRRSSLPNGEGLQLKE) are disordered. T113 is subject to Phosphothreonine. A phosphoserine mark is found at S124 and S211. An Omega-N-methylarginine modification is found at R213. Residue S221 is modified to Phosphoserine. Phosphothreonine is present on T224. S422 carries the post-translational modification Phosphoserine.

This sequence belongs to the PP2C family.

It localises to the nucleus. The protein localises to the cytoplasm. It catalyses the reaction O-phospho-L-seryl-[protein] + H2O = L-seryl-[protein] + phosphate. The catalysed reaction is O-phospho-L-threonyl-[protein] + H2O = L-threonyl-[protein] + phosphate. Dephosphorylates CDKN1B at 'Thr-187', thus removing a signal for proteasomal degradation. This Homo sapiens (Human) protein is Protein phosphatase 1H (PPM1H).